The chain runs to 130 residues: Spore coat protein M (130 aa).

In terms of biological role, involved in spore outer coat assembly. May be part of a cross-linked insoluble skeleton that surrounds the spore, serves as a matrix for the assembly of additional outer coat material, and confers structural stability to the final structure. This Bacillus subtilis (strain 168) protein is Spore coat protein M (cotM).